The sequence spans 144 residues: Hexon-interlacing protein (144 aa).

Residues 106-133 (LTVMLAKLETLTAQLEELSQKVEELADA) adopt a coiled-coil conformation.

This sequence belongs to the adenoviridae hexon-interlacing protein family. Homotrimer. Interacts with hexon protein; this interaction tethers the hexons together. Self-interacts with adjacent proteins. Interacts with kinesin light chain KLC1; this interaction leads to capsid disruption at the nuclear pore complex during virus entry into host cell.

Its subcellular location is the virion. The protein resides in the host nucleus. Functionally, structural component of the virion that acts as a cement protein on the capsid exterior and forms triskelion structures consisting of three molecules that stabilize three hexon trimers at the center of each icosahedral facet and fixes the peripentonal hexons. Dispensable for assembly. During virus entry, recruits the anterograde motor kinesin-1 to the capsid docked at the nuclear pore complex thereby subjecting the docked capsid to a pulling force. The resulting tension leads to capsid disruption, dispersion of capsid fragments toward cell periphery and eventually viral DNA entry into the host nucleus. In Homo sapiens (Human), this protein is Hexon-interlacing protein.